We begin with the raw amino-acid sequence, 642 residues long: MYKSIAIMIILLPLASALINGLFVRRIDKKLASIVATSFLSLSALFALIIFYHTGLNGHIIHIKLLPWIEVSQFKVDWSIYIDQLTSIMFIAVTWVSSVVHIYSLGYMSRDKGIVRFLSFLSLFTFFMLMLVSADNFLQLFFGWEGVGICSYLLIGFWYSKESANKAAIKAFIANRVGDFAFILGVITIIFYCHSANYEDVFLLAPKLANTKILLADFEISILDIACLLLFIGCMGKSAQIGLHVWLPDAMEGPTPVSALIHAATMVTAGVFLVARCSYLFEYSPMVLQFITIIGGITCLFAASIAIMQNDIKKIIAYSTCSQLGYMFMACGVSAYNSGIFHLVTHAFFKALLFLSAGSVIHAVHEQDIFKMGELRNKMPITYGNFLIGSLALIGIYPLAGFYSKDSILEAAYSSGSFMFIFGILAAILTAIYSMKIIMLVFHGKTRLEKDVFEHAHEPPKVMNNPLTLLVAGSFFSGMIGYYLLSMDKPNGYFHDSLLNLHAYKLLITHPPLHIKLLPMVVGIIGIVVGIYLYKSDVVMSFLRRQESSKDNYFTKILINKYYFDELYNFLIVKPINCLACLFYSGDQKIIDRFGPNGFARSVNCFSRLTGKTQTGYVFNYTLYVVLFVVVTISYFVWLVAV.

16 helical membrane-spanning segments follow: residues 4–24, 31–51, 88–108, 114–134, 137–157, 171–191, 213–233, 255–275, 287–307, 315–335, 340–360, 383–403, 418–438, 467–487, 513–533, and 622–642; these read SIAIMIILLPLASALINGLFV, LASIVATSFLSLSALFALIIF, IMFIAVTWVSSVVHIYSLGYM, IVRFLSFLSLFTFFMLMLVSA, FLQLFFGWEGVGICSYLLIGF, AFIANRVGDFAFILGVITIIF, ILLADFEISILDIACLLLFIG, TPVSALIHAATMVTAGVFLVA, VLQFITIIGGITCLFAASIAI, IIAYSTCSQLGYMFMACGVSA, IFHLVTHAFFKALLFLSAGSV, YGNFLIGSLALIGIYPLAGFY, FMFIFGILAAILTAIYSMKII, LTLLVAGSFFSGMIGYYLLSM, LHIKLLPMVVGIIGIVVGIYL, and TLYVVLFVVVTISYFVWLVAV.

It belongs to the complex I subunit 5 family.

It is found in the cell membrane. It carries out the reaction a quinone + NADH + 5 H(+)(in) = a quinol + NAD(+) + 4 H(+)(out). NDH-1 shuttles electrons from NADH, via FMN and iron-sulfur (Fe-S) centers, to quinones in the respiratory chain. Couples the redox reaction to proton translocation (for every two electrons transferred, four hydrogen ions are translocated across the cytoplasmic membrane), and thus conserves the redox energy in a proton gradient. In Rickettsia bellii (strain RML369-C), this protein is NADH-quinone oxidoreductase subunit L (nuoL).